We begin with the raw amino-acid sequence, 468 residues long: Glycine--tRNA ligase (468 aa).

Arg101 and Glu170 together coordinate substrate. ATP-binding positions include 202-204 (RNE), 212-217 (FRTREF), 289-290 (EL), and 333-336 (GLTR). 217–221 (FEQME) is a binding site for substrate. A substrate-binding site is contributed by 329–333 (EPAAG).

Belongs to the class-II aminoacyl-tRNA synthetase family. In terms of assembly, homodimer.

Its subcellular location is the cytoplasm. The enzyme catalyses tRNA(Gly) + glycine + ATP = glycyl-tRNA(Gly) + AMP + diphosphate. Functionally, catalyzes the attachment of glycine to tRNA(Gly). This chain is Glycine--tRNA ligase, found in Mycolicibacterium vanbaalenii (strain DSM 7251 / JCM 13017 / BCRC 16820 / KCTC 9966 / NRRL B-24157 / PYR-1) (Mycobacterium vanbaalenii).